The chain runs to 476 residues: 3-isopropylmalate dehydratase large subunit (476 aa).

Cysteine 355, cysteine 416, and cysteine 419 together coordinate [4Fe-4S] cluster.

The protein belongs to the aconitase/IPM isomerase family. LeuC type 1 subfamily. In terms of assembly, heterodimer of LeuC and LeuD. Requires [4Fe-4S] cluster as cofactor.

The enzyme catalyses (2R,3S)-3-isopropylmalate = (2S)-2-isopropylmalate. Its pathway is amino-acid biosynthesis; L-leucine biosynthesis; L-leucine from 3-methyl-2-oxobutanoate: step 2/4. In terms of biological role, catalyzes the isomerization between 2-isopropylmalate and 3-isopropylmalate, via the formation of 2-isopropylmaleate. The sequence is that of 3-isopropylmalate dehydratase large subunit from Sphingopyxis alaskensis (strain DSM 13593 / LMG 18877 / RB2256) (Sphingomonas alaskensis).